We begin with the raw amino-acid sequence, 555 residues long: Inositol 1,4,5-triphosphate receptor associated 2 (555 aa).

At 1–495 (MESTPFSGVA…LKSSIRKANK (495 aa)) the chain is on the cytoplasmic side. Disordered regions lie at residues 84 to 103 (SLPLPRHTSSTDGTITSSDP) and 128 to 147 (RSASPTIEAQGTSPAHDNIA). Threonine 91 bears the Phosphothreonine mark. Low complexity predominate over residues 91–102 (TSSTDGTITSSD). Residues 129–142 (SASPTIEAQGTSPA) are compositionally biased toward polar residues. A coiled-coil region spans residues 227–341 (TLEKRVKLEE…LEELKQVLLQ (115 aa)). Phosphoserine occurs at positions 363, 370, and 424. Residues 437 to 469 (ELKTKDDSEPSGEETVERTRKPSLSEKKNNPSK) form a disordered region. Residues 451-465 (TVERTRKPSLSEKKN) are compositionally biased toward basic and acidic residues. Residues 496–516 (ALWLSIAFIVLFAALMSFLTG) traverse the membrane as a helical; Anchor for type IV membrane protein segment. At 517–555 (QLFQKSVDAAPTQQEDSWTSLEHILWPFTRLRHNGPPPV) the chain is on the lumenal side.

It belongs to the IRAG2 family. Interacts (via coiled-coil domain) with ITPR3. Interacts with SUN1 and SUN2. Interacts with microtubules. Interacts with HCN4; regulates HCN4 channel activity. Post-translationally, the removal of the C-terminal lumenal domain occurs by proteolytic processing. As to expression, expressed at high levels in pre B-cells, mature B-cells and pre T-cells. Expressed at low levels in mature T-cells and plasma B-cells. Expressed in germinal center B-cells, splenic marginal zone cells and B-cell lymphomas. Expressed in neuronal cells in the cerebral cortex, epithelial cells in tonsil, adrenal glands, zymogen-producing cells in the stomach and epithelial cells in seminal vesicles.

The protein localises to the cytoplasm. It is found in the endoplasmic reticulum membrane. Its subcellular location is the nucleus envelope. It localises to the cytoskeleton. The protein resides in the microtubule organizing center. The protein localises to the centrosome. It is found in the spindle pole. Its subcellular location is the chromosome. Functionally, plays a role in the delivery of peptides to major histocompatibility complex (MHC) class I molecules; this occurs in a transporter associated with antigen processing (TAP)-independent manner. May play a role in taste signal transduction via ITPR3. May play a role during fertilization in pronucleus congression and fusion. Plays a role in maintaining nuclear shape, maybe as a component of the LINC complex and through interaction with microtubules. Plays a role in the regulation of cellular excitability by regulating the hyperpolarization-activated cyclic nucleotide-gated HCN4 channel activity. This Homo sapiens (Human) protein is Inositol 1,4,5-triphosphate receptor associated 2.